We begin with the raw amino-acid sequence, 391 residues long: Succinate--CoA ligase [ADP-forming] subunit beta (391 aa).

The ATP-grasp domain occupies 9–248 (KDILRKFGVA…ITEEDPFEVE (240 aa)). ATP contacts are provided by residues lysine 50, 57–59 (GRG), glutamate 103, methionine 106, and glutamate 111. Residues asparagine 203 and aspartate 217 each contribute to the Mg(2+) site. Residues asparagine 268 and 325–327 (GIV) contribute to the substrate site.

It belongs to the succinate/malate CoA ligase beta subunit family. Heterotetramer of two alpha and two beta subunits. It depends on Mg(2+) as a cofactor.

The catalysed reaction is succinate + ATP + CoA = succinyl-CoA + ADP + phosphate. It catalyses the reaction GTP + succinate + CoA = succinyl-CoA + GDP + phosphate. Its pathway is carbohydrate metabolism; tricarboxylic acid cycle; succinate from succinyl-CoA (ligase route): step 1/1. Functionally, succinyl-CoA synthetase functions in the citric acid cycle (TCA), coupling the hydrolysis of succinyl-CoA to the synthesis of either ATP or GTP and thus represents the only step of substrate-level phosphorylation in the TCA. The beta subunit provides nucleotide specificity of the enzyme and binds the substrate succinate, while the binding sites for coenzyme A and phosphate are found in the alpha subunit. The protein is Succinate--CoA ligase [ADP-forming] subunit beta of Chlorobium phaeovibrioides (strain DSM 265 / 1930) (Prosthecochloris vibrioformis (strain DSM 265)).